The following is a 187-amino-acid chain: tRNA (mnm(5)s(2)U34)-methyltransferase (187 aa).

6 residues coordinate S-adenosyl-L-methionine: Asn31, Asn33, Asp51, Gln53, His77, and Glu78.

The protein belongs to the methyltransferase superfamily. MnmM family. In terms of assembly, homodimer.

It catalyses the reaction 5-aminomethyl-2-thiouridine(34) in tRNA + S-adenosyl-L-methionine = 5-methylaminomethyl-2-thiouridine(34) in tRNA + S-adenosyl-L-homocysteine + H(+). Its pathway is tRNA modification. Involved in the biosynthesis of 5-methylaminomethyl-2-thiouridine (mnm(5)s(2)U) at the wobble position (U34) in tRNA. Catalyzes the transfer of a methyl group from S-adenosyl-L-methionine to nm(5)s(2)U34 to form mnm(5)s(2)U34. The protein is tRNA (mnm(5)s(2)U34)-methyltransferase of Staphylococcus aureus (strain NCTC 8325 / PS 47).